The chain runs to 1178 residues: Pyruvate carboxylase, mitochondrial (1178 aa).

A mitochondrion-targeting transit peptide spans 1–20 (MLKFQTVRGGLRLLGVRRSS). K35 and K39 each carry N6-acetyllysine. The Biotin carboxylation domain maps to 36–486 (PIKKVMVANR…DTQFIDENPE (451 aa)). Position 79 is an N6-acetyllysine; alternate (K79). N6-succinyllysine; alternate is present on K79. Residues K148 and K152 each carry the N6-acetyllysine modification. ATP contacts are provided by K152 and E236. The ATP-grasp domain maps to 156–353 (RAIAIAAGVP…LVHAQIHVSE (198 aa)). K241 is modified (N6-acetyllysine). H271 contacts ATP. N6-acetyllysine occurs at positions 297, 316, and 319. R328 is an active-site residue. An N6-acetyllysine modification is found at K434. K442 carries the N6-succinyllysine modification. Residues 563–832 (LLLMDTTFRD…DTEVPLERVF (270 aa)) form the Pyruvate carboxyltransferase domain. 571 to 575 (RDAHQ) provides a ligand contact to substrate. D572 contacts Mn(2+). K589 carries the post-translational modification N6-acetyllysine. R644 provides a ligand contact to substrate. 2 positions are modified to N6-acetyllysine: K661 and K717. K741 provides a ligand contact to Mn(2+). K741 is modified (N6-carboxylysine). K748 bears the N6-acetyllysine mark. Residues H771 and H773 each coordinate Mn(2+). K892 is modified (N6-acetyllysine). T908 is a substrate binding site. Position 969 is an N6-acetyllysine (K969). K988 bears the N6-acetyllysine; alternate mark. K988 bears the N6-succinyllysine; alternate mark. Residue K992 is modified to N6-acetyllysine. T1003 is modified (phosphothreonine). K1061, K1090, and K1124 each carry N6-acetyllysine. Positions 1109 to 1178 (KGQIGAPMPG…EGDDLILEIE (70 aa)) constitute a Biotinyl-binding domain. Position 1144 is an N6-biotinyllysine (K1144).

As to quaternary structure, homotetramer. Interacts (via the biotin carboxylation domain) with SIRT4. Biotin serves as cofactor. The cofactor is Mn(2+). Post-translationally, acetylation of Lys-748 might play a role in catalytic activity regulation.

It is found in the mitochondrion matrix. It carries out the reaction hydrogencarbonate + pyruvate + ATP = oxaloacetate + ADP + phosphate + H(+). Its pathway is carbohydrate biosynthesis; gluconeogenesis. Its function is as follows. Pyruvate carboxylase catalyzes a 2-step reaction, involving the ATP-dependent carboxylation of the covalently attached biotin in the first step and the transfer of the carboxyl group to pyruvate in the second. Catalyzes in a tissue specific manner, the initial reactions of glucose (liver, kidney) and lipid (adipose tissue, liver, brain) synthesis from pyruvate. This chain is Pyruvate carboxylase, mitochondrial (Pc), found in Rattus norvegicus (Rat).